The chain runs to 208 residues: Large ribosomal subunit protein uL4 (208 aa).

The tract at residues 44-79 is disordered; the sequence is QRQGTHKSKERSEISGSTRKIGRQKGGGGARRGDMN.

The protein belongs to the universal ribosomal protein uL4 family. Part of the 50S ribosomal subunit.

In terms of biological role, one of the primary rRNA binding proteins, this protein initially binds near the 5'-end of the 23S rRNA. It is important during the early stages of 50S assembly. It makes multiple contacts with different domains of the 23S rRNA in the assembled 50S subunit and ribosome. Forms part of the polypeptide exit tunnel. The sequence is that of Large ribosomal subunit protein uL4 from Bacteroides thetaiotaomicron (strain ATCC 29148 / DSM 2079 / JCM 5827 / CCUG 10774 / NCTC 10582 / VPI-5482 / E50).